Consider the following 327-residue polypeptide: tRNA uridine(34) hydroxylase (327 aa).

The 97-residue stretch at 122-218 (QENRCLVLDV…YGLKMGTGKW (97 aa)) folds into the Rhodanese domain. The active-site Cysteine persulfide intermediate is the Cys-178.

Belongs to the TrhO family.

It carries out the reaction uridine(34) in tRNA + AH2 + O2 = 5-hydroxyuridine(34) in tRNA + A + H2O. Catalyzes oxygen-dependent 5-hydroxyuridine (ho5U) modification at position 34 in tRNAs. This Chlamydia trachomatis serovar L2 (strain ATCC VR-902B / DSM 19102 / 434/Bu) protein is tRNA uridine(34) hydroxylase.